A 400-amino-acid chain; its full sequence is Mu-type opioid receptor (400 aa).

Over 1–68 (MDSSAVPANA…CPPTGSPSMI (68 aa)) the chain is Extracellular. N9, N12, N33, N40, and N48 each carry an N-linked (GlcNAc...) asparagine glycan. A helical transmembrane segment spans residues 69-93 (TAITIMALYSIVCVVGLFGNFLVMY). Over 94-106 (VIVRYTKMKTATN) the chain is Cytoplasmic. A helical membrane pass occupies residues 107 to 131 (IYIFNLALADALATSTLPFQSVNYL). The Extracellular portion of the chain corresponds to 132–142 (MGTWPFGTILC). The cysteines at positions 142 and 219 are disulfide-linked. A helical transmembrane segment spans residues 143–165 (KIVISIDYYNMFTSIFTLCTMSV). Residues 166–185 (DRYIAVCHPVKALDFRTPRN) lie on the Cytoplasmic side of the membrane. Phosphotyrosine is present on Y168. The chain crosses the membrane as a helical span at residues 186–207 (AKIVNVCNWIISSAIGLPVMFM). Over 208-230 (ATTKYRQGSIDCTLTFSHPTWYW) the chain is Extracellular. A helical transmembrane segment spans residues 231 to 255 (ENLLKICVFIFAFIMPVLIITVCYG). Residues 256 to 279 (LMILRLKSVRMLSGSKEKDRNLRR) are Cytoplasmic-facing. Residues 280 to 306 (ITRMVLVVVAVFIVCWTPIHIYVIIKA) traverse the membrane as a helical segment. Residues 307–314 (LVTIPETT) lie on the Extracellular side of the membrane. Residues 315 to 338 (FQTVSWHFCIALGYTNSCLNPVLY) form a helical membrane-spanning segment. The NPxxY; plays a role in stabilizing the activated conformation of the receptor signature appears at 334–338 (NPVLY). At 339–400 (AFLDENFKRC…NLEAETAPLP (62 aa)) the chain is on the cytoplasmic side. Residue C353 is the site of S-palmitoyl cysteine attachment. S365 is subject to Phosphoserine. T372 carries the phosphothreonine modification. S377 is subject to Phosphoserine. T396 is subject to Phosphothreonine.

Belongs to the G-protein coupled receptor 1 family. Forms homooligomers and heterooligomers with other GPCRs, such as OPRD1, OPRK1, OPRL1, NPFFR2, ADRA2A, SSTR2, CNR1 and CCR5 (probably in dimeric forms). Interacts with heterotrimeric G proteins; interaction with a heterotrimeric complex containing GNAI1, GNB1 and GNG2 stabilizes the active conformation of the receptor and increases its affinity for endomorphin-2, the synthetic opioid peptide DAMGO and for morphinan agonists. Interacts with PPL; the interaction disrupts agonist-mediated G-protein activation. Interacts (via C-terminus) with DNAJB4 (via C-terminus). Interacts with calmodulin; the interaction inhibits the constitutive activity of OPRM1; it abolishes basal and attenuates agonist-stimulated G-protein coupling. Interacts with FLNA, PLD2, RANBP9 and WLS and GPM6A. Interacts with RTP4. Interacts with SYP and GNAS. Interacts with RGS9, RGS17, RGS20, RGS4, PPP1R9B and HINT1. In terms of processing, phosphorylated. Differentially phosphorylated in basal and agonist-induced conditions. Agonist-mediated phosphorylation modulates receptor internalization. Phosphorylated by GRK2 in a agonist-dependent manner. Phosphorylation at Tyr-168 requires receptor activation, is dependent on non-receptor protein tyrosine kinase Src and results in a decrease in agonist efficacy by reducing G-protein coupling efficiency. Phosphorylated on tyrosine residues; the phosphorylation is involved in agonist-induced G-protein-independent receptor down-regulation. Phosphorylation at Ser-377 is involved in G-protein-dependent but not beta-arrestin-dependent activation of the ERK pathway. Ubiquitinated. A basal ubiquitination seems not to be related to degradation. Ubiquitination is increased upon formation of OPRM1:OPRD1 oligomers leading to proteasomal degradation; the ubiquitination is diminished by RTP4.

It localises to the cell membrane. The protein localises to the cell projection. The protein resides in the axon. It is found in the perikaryon. Its subcellular location is the dendrite. It localises to the endosome. In terms of biological role, receptor for endogenous opioids such as beta-endorphin and endomorphin. Receptor for natural and synthetic opioids including morphine, heroin, DAMGO, fentanyl, etorphine, buprenorphin and methadone. Also activated by enkephalin peptides, such as Met-enkephalin or Met-enkephalin-Arg-Phe, with higher affinity for Met-enkephalin-Arg-Phe. Agonist binding to the receptor induces coupling to an inactive GDP-bound heterotrimeric G-protein complex and subsequent exchange of GDP for GTP in the G-protein alpha subunit leading to dissociation of the G-protein complex with the free GTP-bound G-protein alpha and the G-protein beta-gamma dimer activating downstream cellular effectors. The agonist- and cell type-specific activity is predominantly coupled to pertussis toxin-sensitive G(i) and G(o) G alpha proteins, GNAI1, GNAI2, GNAI3 and GNAO1, and to a lesser extent to pertussis toxin-insensitive G alpha proteins GNAZ and GNA15. They mediate an array of downstream cellular responses, including inhibition of adenylate cyclase activity and both N-type and L-type calcium channels, activation of inward rectifying potassium channels, mitogen-activated protein kinase (MAPK), phospholipase C (PLC), phosphoinositide/protein kinase (PKC), phosphoinositide 3-kinase (PI3K) and regulation of NF-kappa-B. Also couples to adenylate cyclase stimulatory G alpha proteins. The selective temporal coupling to G-proteins and subsequent signaling can be regulated by RGSZ proteins, such as RGS9, RGS17 and RGS4. Phosphorylation by members of the GPRK subfamily of Ser/Thr protein kinases and association with beta-arrestins is involved in short-term receptor desensitization. Beta-arrestins associate with the GPRK-phosphorylated receptor and uncouple it from the G-protein thus terminating signal transduction. The phosphorylated receptor is internalized through endocytosis via clathrin-coated pits which involves beta-arrestins. The activation of the ERK pathway occurs either in a G-protein-dependent or a beta-arrestin-dependent manner and is regulated by agonist-specific receptor phosphorylation. Acts as a class A G-protein coupled receptor (GPCR) which dissociates from beta-arrestin at or near the plasma membrane and undergoes rapid recycling. Receptor down-regulation pathways are varying with the agonist and occur dependent or independent of G-protein coupling. Endogenous ligands induce rapid desensitization, endocytosis and recycling. Heterooligomerization with other GPCRs can modulate agonist binding, signaling and trafficking properties. Involved in neurogenesis. The protein is Mu-type opioid receptor (OPRM1) of Saimiri boliviensis boliviensis (Bolivian squirrel monkey).